Reading from the N-terminus, the 431-residue chain is Histidine--tRNA ligase (431 aa).

Belongs to the class-II aminoacyl-tRNA synthetase family.

It localises to the cytoplasm. It carries out the reaction tRNA(His) + L-histidine + ATP = L-histidyl-tRNA(His) + AMP + diphosphate + H(+). This Pyrococcus horikoshii (strain ATCC 700860 / DSM 12428 / JCM 9974 / NBRC 100139 / OT-3) protein is Histidine--tRNA ligase (hisS).